The chain runs to 337 residues: Thymidylate synthase (337 aa).

Residues Arg74 and 199-200 (RR) each bind dUMP. Cys219 (nucleophile) is an active-site residue. DUMP-binding positions include 239–242 (RSGD), Asn250, and 280–282 (HIY). Asp242 is a binding site for (6R)-5,10-methylene-5,6,7,8-tetrahydrofolate. Ala336 serves as a coordination point for (6R)-5,10-methylene-5,6,7,8-tetrahydrofolate.

It belongs to the thymidylate synthase family. Homodimer.

The enzyme catalyses dUMP + (6R)-5,10-methylene-5,6,7,8-tetrahydrofolate = 7,8-dihydrofolate + dTMP. It functions in the pathway pyrimidine metabolism; dTTP biosynthesis. In Homo sapiens (Human), this protein is Thymidylate synthase (70).